The chain runs to 374 residues: P2Y purinoceptor 2 (374 aa).

Topologically, residues methionine 1–lysine 32 are extracellular. 2 N-linked (GlcNAc...) asparagine glycosylation sites follow: asparagine 9 and asparagine 13. Residues tyrosine 33–leucine 59 traverse the membrane as a helical segment. The Cytoplasmic segment spans residues cysteine 60–threonine 70. The chain crosses the membrane as a helical span at residues tyrosine 71–tyrosine 93. The Extracellular segment spans residues alanine 94–arginine 110. A disulfide bridge links cysteine 106 with cysteine 183. A helical transmembrane segment spans residues phenylalanine 111 to valine 129. Residues histidine 130–arginine 152 lie on the Cytoplasmic side of the membrane. The chain crosses the membrane as a helical span at residues valine 153 to valine 172. The Extracellular segment spans residues threonine 173 to histidine 194. Residues phenylalanine 195–leucine 220 traverse the membrane as a helical segment. Residues methionine 221–threonine 245 lie on the Cytoplasmic side of the membrane. Residues isoleucine 246–tyrosine 268 form a helical membrane-spanning segment. Residues serine 269–alanine 286 are Extracellular-facing. A helical membrane pass occupies residues tyrosine 287 to alanine 308. Over glycine 309–leucine 374 the chain is Cytoplasmic. The disordered stretch occupies residues aspartate 318 to leucine 374. The span at alanine 331–proline 340 shows a compositional bias: basic residues. Basic and acidic residues predominate over residues asparagine 341 to glutamate 361.

This sequence belongs to the G-protein coupled receptor 1 family.

It is found in the cell membrane. In terms of biological role, receptor for ATP and UTP coupled to G-proteins that activate a phosphatidylinositol-calcium second messenger system. The affinity range is UTP = ATP &gt; ATP-gamma-S &gt;&gt; 2-methylthio-ATP = ADP. This is P2Y purinoceptor 2 (P2ry2) from Rattus norvegicus (Rat).